Here is a 218-residue protein sequence, read N- to C-terminus: Ribosomal RNA large subunit methyltransferase E (218 aa).

S-adenosyl-L-methionine is bound by residues Gly-64, Trp-66, Asp-92, Asp-108, and Asp-133. The Proton acceptor role is filled by Lys-173.

The protein belongs to the class I-like SAM-binding methyltransferase superfamily. RNA methyltransferase RlmE family.

It localises to the cytoplasm. The catalysed reaction is uridine(2552) in 23S rRNA + S-adenosyl-L-methionine = 2'-O-methyluridine(2552) in 23S rRNA + S-adenosyl-L-homocysteine + H(+). Specifically methylates the uridine in position 2552 of 23S rRNA at the 2'-O position of the ribose in the fully assembled 50S ribosomal subunit. The protein is Ribosomal RNA large subunit methyltransferase E of Paracidovorax citrulli (strain AAC00-1) (Acidovorax citrulli).